Reading from the N-terminus, the 241-residue chain is 1-(5-phosphoribosyl)-5-[(5-phosphoribosylamino)methylideneamino] imidazole-4-carboxamide isomerase (241 aa).

The active-site Proton acceptor is Asp-8. Asp-130 serves as the catalytic Proton donor.

It belongs to the HisA/HisF family.

Its subcellular location is the cytoplasm. The enzyme catalyses 1-(5-phospho-beta-D-ribosyl)-5-[(5-phospho-beta-D-ribosylamino)methylideneamino]imidazole-4-carboxamide = 5-[(5-phospho-1-deoxy-D-ribulos-1-ylimino)methylamino]-1-(5-phospho-beta-D-ribosyl)imidazole-4-carboxamide. The protein operates within amino-acid biosynthesis; L-histidine biosynthesis; L-histidine from 5-phospho-alpha-D-ribose 1-diphosphate: step 4/9. This is 1-(5-phosphoribosyl)-5-[(5-phosphoribosylamino)methylideneamino] imidazole-4-carboxamide isomerase from Flavobacterium psychrophilum (strain ATCC 49511 / DSM 21280 / CIP 103535 / JIP02/86).